The chain runs to 86 residues: Small ribosomal subunit protein uS15 (86 aa).

The protein belongs to the universal ribosomal protein uS15 family. As to quaternary structure, part of the 30S ribosomal subunit. Forms a bridge to the 50S subunit in the 70S ribosome, contacting the 23S rRNA.

In terms of biological role, one of the primary rRNA binding proteins, it binds directly to 16S rRNA where it helps nucleate assembly of the platform of the 30S subunit by binding and bridging several RNA helices of the 16S rRNA. Forms an intersubunit bridge (bridge B4) with the 23S rRNA of the 50S subunit in the ribosome. This is Small ribosomal subunit protein uS15 from Neorickettsia sennetsu (strain ATCC VR-367 / Miyayama) (Ehrlichia sennetsu).